We begin with the raw amino-acid sequence, 118 residues long: Large ribosomal subunit protein bL19 (118 aa).

Belongs to the bacterial ribosomal protein bL19 family.

This protein is located at the 30S-50S ribosomal subunit interface and may play a role in the structure and function of the aminoacyl-tRNA binding site. This Campylobacter jejuni subsp. doylei (strain ATCC BAA-1458 / RM4099 / 269.97) protein is Large ribosomal subunit protein bL19.